We begin with the raw amino-acid sequence, 762 residues long: MAIQTSNLGYPRIGLQREWKKTLEAFWSNKINEEQFLTTMKEIRLQHVKVQQEKGIELIPIGDFTYYDHVLDTAYMLGFIPSRFSEFTSYLDVYFAMARGSKDHVASEMTKWFNTNYHYIVPEYEEGLQISLKDNRPLRLYEEAKQELGVDGKPVILGPYTFLKLAKGYTQEQFATILKQLVAPYVQLLSELHAAGAQIIQVDEPIFASLTKEEVQQAKEIYEAIRKEVPNATLLLQTYFDSVEENYEEFITFPVSSIGLDFVHGKEGNLNAISKYGFPADKTLAVGCIDGRNIWRADLDEVLTLFTTLQKQVQTKDLIVQPSCSLLHTPIDKTEETHLSTELFDALAFANQKLEELVLIHSALTQGTESISNELETYRNVHHTIRSSAARNREDVKAARTALKEEDFSRPLPFEKRYELQQVALKLPLLPTTTIGSFPQTTEVRQTRKEWRNGIISNEQYEQFIEKETEKWIRYQEEIGLDVLVHGEFERTDMVEYFSERLAGFSFTKNGWVQSYGSRCVKPPVIYGDVAFINGMTIKETVYAQSLTEKVVKGMLTGPVTILNWSFVRNDIPRKEVSYQIALALRHEIELLESSGIRVIQVDEPALREGMPLKEKDWDAYITWAVQSFLLATSSVANETQIHTHMCYSNFEDIVDAIRALDADVISIETSRSHGEFIDTLKHTTYEKGIGLGVYDIHSPRVPSKDEMYKIVEQSLQVCDPKYFWINPDCGLKTRRTEEVIPALEHMVQAAKDARSLLKTNA.

5-methyltetrahydropteroyltri-L-glutamate-binding positions include 17–20 (REWK) and Lys-111. Residues 435–437 (IGS) and Glu-488 contribute to the L-homocysteine site. L-methionine-binding positions include 435 to 437 (IGS) and Glu-488. 5-methyltetrahydropteroyltri-L-glutamate contacts are provided by residues 519-520 (RC) and Trp-565. Asp-603 is an L-homocysteine binding site. Asp-603 is an L-methionine binding site. Glu-609 provides a ligand contact to 5-methyltetrahydropteroyltri-L-glutamate. 3 residues coordinate Zn(2+): His-645, Cys-647, and Glu-669. His-698 (proton donor) is an active-site residue. Cys-730 is a Zn(2+) binding site.

It belongs to the vitamin-B12 independent methionine synthase family. It depends on Zn(2+) as a cofactor.

It catalyses the reaction 5-methyltetrahydropteroyltri-L-glutamate + L-homocysteine = tetrahydropteroyltri-L-glutamate + L-methionine. It functions in the pathway amino-acid biosynthesis; L-methionine biosynthesis via de novo pathway; L-methionine from L-homocysteine (MetE route): step 1/1. Its function is as follows. Catalyzes the transfer of a methyl group from 5-methyltetrahydrofolate to homocysteine resulting in methionine formation. In Bacillus thuringiensis subsp. konkukian (strain 97-27), this protein is 5-methyltetrahydropteroyltriglutamate--homocysteine methyltransferase.